A 912-amino-acid polypeptide reads, in one-letter code: Alpha-actinin-4 (912 aa).

The actin-binding stretch occupies residues 1–267 (MVDYHAANQA…IMTYVSSFYH (267 aa)). Positions 12–27 (QYGPNSGGGNGAGGGG) are interaction with VCL. Residues 12–31 (QYGPNSGGGNGAGGGGSMGD) form a disordered region. Positions 16-29 (NSGGGNGAGGGGSM) are enriched in gly residues. A Phosphotyrosine modification is found at Tyr-32. Residues 41–62 (RDLLLDPAWEKQQRKTFTAWCN) form an interaction with VCL region. 2 consecutive Calponin-homology (CH) domains span residues 51-155 (KQQR…LRFA) and 164-270 (TSAK…HAFS). An LXXLL motif motif is present at residues 85–89 (LMLLL). The interaction with VCL stretch occupies residues 109–127 (KINNVNKALDFIASKGVKL). N6-acetyllysine is present on Lys-115. The tract at residues 178 to 193 (TAPYKNVNVQNFHISW) is polyphosphoinositide (PIP2)-binding. N6-acetyllysine is present on Lys-215. Phosphothreonine is present on Thr-250. 4 Spectrin repeats span residues 294 to 404 (HLME…WLLN), 414 to 519 (HLAE…ALEK), 529 to 640 (QLHL…ALLE), and 650 to 753 (HLRR…EVEN). 2 positions are modified to N6-acetyllysine: Lys-593 and Lys-626. A Phosphoserine modification is found at Ser-697. Positions 737–912 (WEQLLTTIAR…STALYGESDL (176 aa)) are mediates interaction with MICALL2. EF-hand domains follow at residues 766–801 (EQMQ…LGYD) and 807–842 (QGDA…ETTD). Residue Asp-779 coordinates Ca(2+). Position 780 is an N6-acetyllysine (Lys-780). Ca(2+)-binding residues include Asp-781 and Glu-790. Lys-860 bears the N6-acetyllysine mark. At Ser-910 the chain carries Phosphoserine.

The protein belongs to the alpha-actinin family. In terms of assembly, homodimer; antiparallel. Interacts with MAGI1. Interacts with PDLIM2. Identified in a complex with CASK, IQGAP1, MAGI2, NPHS1, SPTAN1 and SPTBN1. Identified in a IGF2BP1-dependent mRNP granule complex containing untranslated mRNAs. Component of the CART complex, at least composed of ACTN4, HGS/HRS, MYO5B and TRIM3. Binds TRIM3 at the N-terminus. Interacts with MICALL2 (preferentially in opened conformation); stimulated by RAB13 activation. Interacts with PPARG and RARA. Binds to VCL; this interaction triggers VCL conformational changes. Interacts with SEPTIN14. Interacts with IGSF8.

Its subcellular location is the nucleus. The protein localises to the cytoplasm. It localises to the cell junction. It is found in the cytoskeleton. The protein resides in the stress fiber. Its subcellular location is the perinuclear region. Its function is as follows. F-actin cross-linking protein which is thought to anchor actin to a variety of intracellular structures. This is a bundling protein. Probably involved in vesicular trafficking via its association with the CART complex. The CART complex is necessary for efficient transferrin receptor recycling but not for EGFR degradation. Involved in tight junction assembly in epithelial cells probably through interaction with MICALL2. Links MICALL2 to the actin cytoskeleton and recruits it to the tight junctions. May also function as a transcriptional coactivator, stimulating transcription mediated by the nuclear hormone receptors PPARG and RARA. Association with IGSF8 regulates the immune synapse formation and is required for efficient T-cell activation. In Mus musculus (Mouse), this protein is Alpha-actinin-4.